The following is a 239-amino-acid chain: DNA repair protein RecO (239 aa).

The protein belongs to the RecO family.

In terms of biological role, involved in DNA repair and RecF pathway recombination. The sequence is that of DNA repair protein RecO from Cereibacter sphaeroides (strain ATCC 17029 / ATH 2.4.9) (Rhodobacter sphaeroides).